The chain runs to 277 residues: Large ribosomal subunit protein uL2 (277 aa).

Residues 199–277 (DHMNTSIGKA…ILLSRHKRKK (79 aa)) are disordered. Residues 209-220 (GRNRWLGRKPHN) are compositionally biased toward basic residues.

The protein belongs to the universal ribosomal protein uL2 family. In terms of assembly, part of the 50S ribosomal subunit. Forms a bridge to the 30S subunit in the 70S ribosome.

Its function is as follows. One of the primary rRNA binding proteins. Required for association of the 30S and 50S subunits to form the 70S ribosome, for tRNA binding and peptide bond formation. It has been suggested to have peptidyltransferase activity; this is somewhat controversial. Makes several contacts with the 16S rRNA in the 70S ribosome. This Bradyrhizobium diazoefficiens (strain JCM 10833 / BCRC 13528 / IAM 13628 / NBRC 14792 / USDA 110) protein is Large ribosomal subunit protein uL2.